A 376-amino-acid polypeptide reads, in one-letter code: Chaperone protein DnaJ (376 aa).

Positions 5–70 (DYYEVLGVAK…QKRAAYDQYG (66 aa)) constitute a J domain. The segment at 136-214 (GYDTQIRVPS…CHGSGKVKET (79 aa)) adopts a CR-type zinc-finger fold. The Zn(2+) site is built by C149, C152, C166, C169, C188, C191, C202, and C205. 4 CXXCXGXG motif repeats span residues 149–156 (CGVCHGSG), 166–173 (CPTCHGQG), 188–195 (CPKCHGTG), and 202–209 (CVHCHGSG).

It belongs to the DnaJ family. As to quaternary structure, homodimer. Zn(2+) is required as a cofactor.

The protein resides in the cytoplasm. Functionally, participates actively in the response to hyperosmotic and heat shock by preventing the aggregation of stress-denatured proteins and by disaggregating proteins, also in an autonomous, DnaK-independent fashion. Unfolded proteins bind initially to DnaJ; upon interaction with the DnaJ-bound protein, DnaK hydrolyzes its bound ATP, resulting in the formation of a stable complex. GrpE releases ADP from DnaK; ATP binding to DnaK triggers the release of the substrate protein, thus completing the reaction cycle. Several rounds of ATP-dependent interactions between DnaJ, DnaK and GrpE are required for fully efficient folding. Also involved, together with DnaK and GrpE, in the DNA replication of plasmids through activation of initiation proteins. In Burkholderia pseudomallei (strain 1710b), this protein is Chaperone protein DnaJ.